Consider the following 229-residue polypeptide: Heptaprenylglyceryl phosphate synthase (229 aa).

Sn-glycerol 1-phosphate is bound at residue Lys-12. Mg(2+)-binding residues include Asp-14 and Ser-40. Sn-glycerol 1-phosphate is bound by residues 159 to 164 (YLEYSG), Gly-189, and 209 to 210 (GN).

The protein belongs to the GGGP/HepGP synthase family. Group I subfamily. In terms of assembly, homodimer. It depends on Mg(2+) as a cofactor.

The enzyme catalyses sn-glycerol 1-phosphate + all-trans-heptaprenyl diphosphate = 3-heptaprenyl-sn-glycero-1-phosphate + diphosphate. The protein operates within membrane lipid metabolism; glycerophospholipid metabolism. Functionally, prenyltransferase that catalyzes in vivo the transfer of the heptaprenyl moiety of heptaprenyl pyrophosphate (HepPP; 35 carbon atoms) to the C3 hydroxyl of sn-glycerol-1-phosphate (G1P), producing heptaprenylglyceryl phosphate (HepGP). This reaction is an ether-bond-formation step in the biosynthesis of archaea-type G1P-based membrane lipids found in Bacillales. The protein is Heptaprenylglyceryl phosphate synthase of Bacillus cereus (strain ZK / E33L).